The primary structure comprises 244 residues: Lipoprotein-releasing system ATP-binding protein LolD (244 aa).

The ABC transporter domain occupies I19–V244. Residue G55–S62 coordinates ATP.

The protein belongs to the ABC transporter superfamily. Lipoprotein translocase (TC 3.A.1.125) family. In terms of assembly, the complex is composed of two ATP-binding proteins (LolD) and two transmembrane proteins (LolC and LolE).

It localises to the cell inner membrane. In terms of biological role, part of the ABC transporter complex LolCDE involved in the translocation of mature outer membrane-directed lipoproteins, from the inner membrane to the periplasmic chaperone, LolA. Responsible for the formation of the LolA-lipoprotein complex in an ATP-dependent manner. In Xanthomonas euvesicatoria pv. vesicatoria (strain 85-10) (Xanthomonas campestris pv. vesicatoria), this protein is Lipoprotein-releasing system ATP-binding protein LolD.